Consider the following 415-residue polypeptide: ATP-dependent RNA helicase RhlB (415 aa).

Positions 9–37 (QRFSDLSLHPIVRDTLAKKGFDFCTPIQA) match the Q motif motif. One can recognise a Helicase ATP-binding domain in the interval 40-218 (LPISLNGRDV…FEDMNDPEYI (179 aa)). An ATP-binding site is contributed by 53 to 60 (AQTGTGKT). The DEAD box motif lies at 164–167 (DEAD). Residues 241-389 (DKMALLLTLM…VSQYETEALL (149 aa)) form the Helicase C-terminal domain.

Belongs to the DEAD box helicase family. RhlB subfamily. Component of the RNA degradosome, which is a multiprotein complex involved in RNA processing and mRNA degradation.

The protein localises to the cytoplasm. It catalyses the reaction ATP + H2O = ADP + phosphate + H(+). Functionally, DEAD-box RNA helicase involved in RNA degradation. Has RNA-dependent ATPase activity and unwinds double-stranded RNA. The polypeptide is ATP-dependent RNA helicase RhlB (Haemophilus influenzae (strain PittEE)).